Reading from the N-terminus, the 311-residue chain is tRNA dimethylallyltransferase (311 aa).

Residue 12–19 participates in ATP binding; the sequence is GPTASGKT. 14 to 19 is a binding site for substrate; it reads TASGKT. Interaction with substrate tRNA stretches follow at residues 37 to 40 and 161 to 165; these read DSAM and QRIQR.

This sequence belongs to the IPP transferase family. Monomer. It depends on Mg(2+) as a cofactor.

The enzyme catalyses adenosine(37) in tRNA + dimethylallyl diphosphate = N(6)-dimethylallyladenosine(37) in tRNA + diphosphate. Catalyzes the transfer of a dimethylallyl group onto the adenine at position 37 in tRNAs that read codons beginning with uridine, leading to the formation of N6-(dimethylallyl)adenosine (i(6)A). This is tRNA dimethylallyltransferase from Coxiella burnetii (strain Dugway 5J108-111).